The primary structure comprises 628 residues: Chaperone protein HtpG (628 aa).

The tract at residues 1-340 (MSTETLQKET…SADLPLNVSR (340 aa)) is a; substrate-binding. Residues 341–557 (EILQHSKDIE…EHDLSGNLER (217 aa)) form a b region. The c stretch occupies residues 558–628 (LLKAAGQKTP…FVRRVNAMLA (71 aa)).

It belongs to the heat shock protein 90 family. In terms of assembly, homodimer.

Its subcellular location is the cytoplasm. Its function is as follows. Molecular chaperone. Has ATPase activity. The sequence is that of Chaperone protein HtpG from Methylobacillus flagellatus (strain ATCC 51484 / DSM 6875 / VKM B-1610 / KT).